The chain runs to 475 residues: MYPCTLLMVLLCLAIMTHGHIQIHGTGMRRNRRDSPHPPSPIYDSFYVPKKGWDETKPGTVLASRNIQAGFTKTQKINLDGAYQLLYRTSGVDDKSPSYSVTTVLVPKNARPNKLVLIMAYEDSNFVECAPSYKIQLGAPLETNPIQTVEELMWTSVLNDGWTVTIPDHQGPLSAFSSSFIHGHASLDAIRATLNFEQLKLDPKSAVVGMGYSGGAIAGGWAASLLGSYATELNVVGWSIGGTPSNVTGTFYGLDGSLFSGFSVAGVAGIVDSYPEVNDYVGSVITPAGNAALQFTREHCMGDIVVGLQNVNLTGKDFVKNEKNFLTDKRIAPILDHLTMGTDSKLTPKVPVYMYHALHDEVIPFDRANQTANAWCKGGANLLFQEYTGIEMGHVSTEVLNTPFVLKFIRDRMSGREFLNGCQWKSDLNPLWRPDILGARLTEVFNSILNFFGTSVGRTDRIIQESIINHNFTSK.

Positions 1–19 (MYPCTLLMVLLCLAIMTHG) are cleaved as a signal peptide. A disulfide bond links Cys-129 and Cys-300. Ser-213 acts as the Nucleophile in catalysis. N-linked (GlcNAc...) asparagine glycans are attached at residues Asn-246 and Asn-312. The active site involves Asp-360. Asn-369 is a glycosylation site (N-linked (GlcNAc...) asparagine). His-394 is an active-site residue. The N-linked (GlcNAc...) asparagine glycan is linked to Asn-471.

This sequence belongs to the AB hydrolase superfamily. Lipase family. Class Lip subfamily.

The catalysed reaction is a triacylglycerol + H2O = a diacylglycerol + a fatty acid + H(+). It carries out the reaction a monoacylglycerol + H2O = glycerol + a fatty acid + H(+). The enzyme catalyses a diacylglycerol + H2O = a monoacylglycerol + a fatty acid + H(+). Its function is as follows. Secreted lipase involved in Dandruff and seborrheic dermatitis (D/SD) probably via lipase-mediated breakdown of sebaceous lipids and release of irritating free fatty acids. Has triacylglycerol lipase activity and is able to hydrolyze triolein. Mostly converts monoolein to di- and triolein, while free fatty acids are only produced in low amounts. The sequence is that of Secreted triacylglycerol lipase LIP5 from Malassezia globosa (strain ATCC MYA-4612 / CBS 7966) (Dandruff-associated fungus).